A 684-amino-acid chain; its full sequence is Probable potassium transport system protein Kup (684 aa).

12 helical membrane-spanning segments follow: residues 19-39 (ALLV…LYVM), 61-81 (VSLI…LIAL), 104-124 (WLVL…MLTP), 151-171 (QVIW…RFGT), 177-197 (AFGP…FIAL), 223-243 (MGLF…ALYS), 255-275 (LSWP…AVWL), 303-323 (LGAI…LISG), 352-372 (LYIP…IGYF), 381-401 (AYGL…YQYL), 407-427 (PAVV…VFFI), and 433-453 (FLHG…VMYV).

Belongs to the HAK/KUP transporter (TC 2.A.72) family.

The protein localises to the cell membrane. The enzyme catalyses K(+)(in) + H(+)(in) = K(+)(out) + H(+)(out). In terms of biological role, transport of potassium into the cell. Likely operates as a K(+):H(+) symporter. The chain is Probable potassium transport system protein Kup from Lacticaseibacillus paracasei (strain ATCC 334 / BCRC 17002 / CCUG 31169 / CIP 107868 / KCTC 3260 / NRRL B-441) (Lactobacillus paracasei).